The primary structure comprises 1181 residues: Putative type II restriction enzyme and methyltransferase RM.MjaORFECS2P (1181 aa).

The protein in the C-terminal section; belongs to the N(4)/N(6)-methyltransferase family.

The catalysed reaction is Endonucleolytic cleavage of DNA to give specific double-stranded fragments with terminal 5'-phosphates.. It catalyses the reaction a 2'-deoxyadenosine in DNA + S-adenosyl-L-methionine = an N(6)-methyl-2'-deoxyadenosine in DNA + S-adenosyl-L-homocysteine + H(+). In terms of biological role, probably a G subtype restriction enzyme that recognizes an undetermined sequence and cleaves at an undetermined site. Probably also acts as an alpha subtype methylase, presumably on the same sequence. The polypeptide is Putative type II restriction enzyme and methyltransferase RM.MjaORFECS2P (Methanocaldococcus jannaschii (strain ATCC 43067 / DSM 2661 / JAL-1 / JCM 10045 / NBRC 100440) (Methanococcus jannaschii)).